We begin with the raw amino-acid sequence, 443 residues long: Tol-Pal system protein TolB (443 aa).

A signal peptide spans 1–33 (MKIGIINTKIRTVFSAFACMIAASLVCTMPARA).

Belongs to the TolB family. In terms of assembly, the Tol-Pal system is composed of five core proteins: the inner membrane proteins TolA, TolQ and TolR, the periplasmic protein TolB and the outer membrane protein Pal. They form a network linking the inner and outer membranes and the peptidoglycan layer.

The protein resides in the periplasm. In terms of biological role, part of the Tol-Pal system, which plays a role in outer membrane invagination during cell division and is important for maintaining outer membrane integrity. This Brucella suis (strain ATCC 23445 / NCTC 10510) protein is Tol-Pal system protein TolB.